We begin with the raw amino-acid sequence, 772 residues long: DnaJ homolog subfamily C member 16 (772 aa).

The signal sequence occupies residues 1-25 (MELKRLGVSWRFLMVLVLILQSLSA). The Cytoplasmic portion of the chain corresponds to 26–533 (LDFDPYRVLG…ESLLHSNWRE (508 aa)). A J domain is found at 29 to 93 (DPYRVLGVSR…EKRTNYDHYG (65 aa)). Residues 119–245 (FDESFFHFPF…LRQFVESLLP (127 aa)) form the Thioredoxin domain. A helical; Anchor for type IV membrane protein transmembrane segment spans residues 534-554 (MMPLLSLIFSALFILFGTVMV). The Extracellular segment spans residues 555-772 (QAFSDSNEER…FYIPSWPELD (218 aa)). The disordered stretch occupies residues 560–591 (SNEERESHPADKEEVPEKAGKTEPSFTKESSS). Residues 561-580 (NEERESHPADKEEVPEKAGK) are compositionally biased toward basic and acidic residues. Residue asparagine 629 is glycosylated (N-linked (GlcNAc...) asparagine).

It is found in the endoplasmic reticulum membrane. Its function is as follows. Plays an important role in regulating the size of autophagosomes during the formation process. The polypeptide is DnaJ homolog subfamily C member 16 (Dnajc16) (Mus musculus (Mouse)).